A 75-amino-acid chain; its full sequence is MPIVSKYTNQQFDDLMNDLITVLEKHKAPVDLSLMVLGNVTTNIINGMAPAQRQAITEKYVQALTSSVDTRHDTH.

The protein belongs to the UPF0352 family.

This chain is UPF0352 protein ASA_2693, found in Aeromonas salmonicida (strain A449).